Reading from the N-terminus, the 636-residue chain is 1-deoxy-D-xylulose-5-phosphate synthase (636 aa).

Residues His84 and 125–127 (GHS) each bind thiamine diphosphate. Asp156 is a binding site for Mg(2+). Thiamine diphosphate is bound by residues 157–158 (GA), Asn185, Phe292, and Glu375. Residue Asn185 participates in Mg(2+) binding.

It belongs to the transketolase family. DXPS subfamily. Homodimer. Mg(2+) is required as a cofactor. It depends on thiamine diphosphate as a cofactor.

It catalyses the reaction D-glyceraldehyde 3-phosphate + pyruvate + H(+) = 1-deoxy-D-xylulose 5-phosphate + CO2. It functions in the pathway metabolic intermediate biosynthesis; 1-deoxy-D-xylulose 5-phosphate biosynthesis; 1-deoxy-D-xylulose 5-phosphate from D-glyceraldehyde 3-phosphate and pyruvate: step 1/1. Catalyzes the acyloin condensation reaction between C atoms 2 and 3 of pyruvate and glyceraldehyde 3-phosphate to yield 1-deoxy-D-xylulose-5-phosphate (DXP). The protein is 1-deoxy-D-xylulose-5-phosphate synthase of Cellvibrio japonicus (strain Ueda107) (Pseudomonas fluorescens subsp. cellulosa).